The following is a 148-amino-acid chain: NADH-quinone oxidoreductase subunit C (148 aa).

It belongs to the complex I 30 kDa subunit family. NDH-1 is composed of 14 different subunits. Subunits NuoB, C, D, E, F, and G constitute the peripheral sector of the complex.

It is found in the cell membrane. The enzyme catalyses a quinone + NADH + 5 H(+)(in) = a quinol + NAD(+) + 4 H(+)(out). Functionally, NDH-1 shuttles electrons from NADH, via FMN and iron-sulfur (Fe-S) centers, to quinones in the respiratory chain. The immediate electron acceptor for the enzyme in this species is believed to be a menaquinone. Couples the redox reaction to proton translocation (for every two electrons transferred, four hydrogen ions are translocated across the cytoplasmic membrane), and thus conserves the redox energy in a proton gradient. This Moorella thermoacetica (strain ATCC 39073 / JCM 9320) protein is NADH-quinone oxidoreductase subunit C.